The primary structure comprises 293 residues: Protease HtpX homolog (293 aa).

2 helical membrane-spanning segments follow: residues 4–24 and 40–60; these read IFLF…TLRV and SLLI…LLIS. H146 lines the Zn(2+) pocket. E147 is an active-site residue. H150 lines the Zn(2+) pocket. 2 helical membrane-spanning segments follow: residues 161–181 and 197–217; these read LIQG…GYFI and FITV…IVAW. E223 contacts Zn(2+).

Belongs to the peptidase M48B family. The cofactor is Zn(2+).

The protein resides in the cell inner membrane. This is Protease HtpX homolog from Bordetella petrii (strain ATCC BAA-461 / DSM 12804 / CCUG 43448).